The primary structure comprises 112 residues: PTS system lactose-specific EIIA component (112 aa).

In terms of domain architecture, PTS EIIA type-3 spans 6 to 104 (EEISMVGFAL…TRYMIRMFKR (99 aa)). Catalysis depends on histidine 80, which acts as the Tele-phosphohistidine intermediate. The residue at position 80 (histidine 80) is a Phosphohistidine; by HPr. Aspartate 83 is a binding site for Mg(2+).

As to quaternary structure, homotrimer. It depends on Mg(2+) as a cofactor.

Its subcellular location is the cytoplasm. Its function is as follows. The phosphoenolpyruvate-dependent sugar phosphotransferase system (sugar PTS), a major carbohydrate active transport system, catalyzes the phosphorylation of incoming sugar substrates concomitantly with their translocation across the cell membrane. The enzyme II LacEF PTS system is involved in lactose transport. The polypeptide is PTS system lactose-specific EIIA component (Lacticaseibacillus casei (Lactobacillus casei)).